Consider the following 323-residue polypeptide: Olfactory receptor 1E2 (323 aa).

Residues 1 to 25 are Extracellular-facing; it reads MMGQNQTSISDFLLLGLPIQPEQQN. A glycan (N-linked (GlcNAc...) asparagine) is linked at asparagine 5. Residues 26–49 traverse the membrane as a helical segment; sequence LCYALFLAMYLTTLLGNLLIIVLI. At 50 to 57 the chain is on the cytoplasmic side; it reads RLDSHLHT. Residues 58–79 traverse the membrane as a helical segment; it reads PVYLFLSNLSFSDLCFSSVTMP. Residues 80 to 100 are Extracellular-facing; that stretch reads KLLQNMQNQDPSIPYADCLTQ. Cysteine 97 and cysteine 198 are disulfide-bonded. The chain crosses the membrane as a helical span at residues 101–120; sequence MYFFLYFSDLESFLLVAMAY. The Cytoplasmic segment spans residues 121–148; the sequence is DRYVAICFPMHYTAICFLLHYTAIMSPM. The helical transmembrane segment at 149 to 167 threads the bilayer; it reads LCLSVVALSWVLTTFHAML. The Extracellular segment spans residues 168–205; the sequence is HTLLMARLCFCADNVIPHFFCDMSALLKLACSDTRVNE. The helical transmembrane segment at 206–228 threads the bilayer; that stretch reads WVIFIMGGLILVIPFLLILGSYA. The Cytoplasmic portion of the chain corresponds to 229 to 245; it reads RIVSSILKVPSSKGICK. Residues 246–269 traverse the membrane as a helical segment; sequence AFSTCGSHLSVVSLFYGTVIGLYL. The Extracellular segment spans residues 270 to 281; the sequence is CPSANSSTLKDT. Asparagine 274 is a glycosylation site (N-linked (GlcNAc...) asparagine). A helical membrane pass occupies residues 282 to 301; it reads VMAMMYTVVTPMLTPFIYSL. Residues 302-323 lie on the Cytoplasmic side of the membrane; the sequence is RNRDMKGALERVICKRKNPFLL.

Belongs to the G-protein coupled receptor 1 family.

It is found in the cell membrane. Its function is as follows. Odorant receptor. In Homo sapiens (Human), this protein is Olfactory receptor 1E2 (OR1E2).